Consider the following 132-residue polypeptide: MPNHDYRELAAVFAGGALGALARAALSALAIPDPARWPWPTFTVNVVGAFLVGYFTTRLLERLPLSSYRRPLLGTGLCGGLTTFSTMQVETISMIEHGHWGLAAAYSVVSITLGLLAVHLATVLVRRVRIRR.

Helical transmembrane passes span 11–31, 37–57, 70–92, and 105–125; these read AVFAGGALGALARAALSALAI, WPWPTFTVNVVGAFLVGYFTT, RPLLGTGLCGGLTTFSTMQVETI, and AYSVVSITLGLLAVHLATVLV. Positions 79 and 82 each coordinate Na(+).

The protein belongs to the fluoride channel Fluc/FEX (TC 1.A.43) family.

It is found in the cell membrane. The enzyme catalyses fluoride(in) = fluoride(out). With respect to regulation, na(+) is not transported, but it plays an essential structural role and its presence is essential for fluoride channel function. Its function is as follows. Fluoride-specific ion channel. Important for reducing fluoride concentration in the cell, thus reducing its toxicity. This is Fluoride-specific ion channel FluC 1 from Mycobacterium bovis (strain ATCC BAA-935 / AF2122/97).